A 332-amino-acid polypeptide reads, in one-letter code: tRNA-dihydrouridine(20/20a) synthase (332 aa).

Residues 20–22 (PMM) and Gln-73 each bind FMN. The Proton donor role is filled by Cys-103. Residues Lys-142, His-174, 214 to 216 (NGG), and 236 to 237 (GR) each bind FMN.

Belongs to the Dus family. DusA subfamily. FMN serves as cofactor.

It carries out the reaction 5,6-dihydrouridine(20) in tRNA + NADP(+) = uridine(20) in tRNA + NADPH + H(+). The enzyme catalyses 5,6-dihydrouridine(20) in tRNA + NAD(+) = uridine(20) in tRNA + NADH + H(+). The catalysed reaction is 5,6-dihydrouridine(20a) in tRNA + NADP(+) = uridine(20a) in tRNA + NADPH + H(+). It catalyses the reaction 5,6-dihydrouridine(20a) in tRNA + NAD(+) = uridine(20a) in tRNA + NADH + H(+). Its function is as follows. Catalyzes the synthesis of 5,6-dihydrouridine (D), a modified base found in the D-loop of most tRNAs, via the reduction of the C5-C6 double bond in target uridines. Specifically modifies U20 and U20a in tRNAs. This Pseudomonas aeruginosa (strain ATCC 15692 / DSM 22644 / CIP 104116 / JCM 14847 / LMG 12228 / 1C / PRS 101 / PAO1) protein is tRNA-dihydrouridine(20/20a) synthase.